The chain runs to 416 residues: Transcription termination factor Rho (416 aa).

Positions 51-121 constitute a Rho RNA-BD domain; sequence LIYSYGELDI…LKLIYVNGEK (71 aa). ATP-binding positions include 162–167, 174–179, and Arg205; these read GKGQRG and KAGKTT.

This sequence belongs to the Rho family. Homohexamer. The homohexamer assembles into an open ring structure.

Facilitates transcription termination by a mechanism that involves Rho binding to the nascent RNA, activation of Rho's RNA-dependent ATPase activity, and release of the mRNA from the DNA template. The polypeptide is Transcription termination factor Rho (Streptobacillus moniliformis (strain ATCC 14647 / DSM 12112 / NCTC 10651 / 9901)).